The sequence spans 419 residues: MAAEVLPSARWQYCGAPDGSQRAVLVQFSNGKLQSPGNMRFTLYENKDSTNPRKRNQRILAAETDRLSYVGNNFGTGALKCNTLCRHFVGILNKTSGQMEVYDAELFNMQPLFSDVSVESELALESQTKTYREKMDSCIEAFGTTKQKRALNTRRMNRVGNESLNRAVAKAAETIIDTKGVTALVSDAIHNDLQDDSLYLPPCYDDAAKPEDVYKFEDLLSPAEYEALQSPSEAFRNVTSEEILKMIEENSHCTFVIEALKSLPSDVESRDRQARCIWFLDTLIKFRAHRVVKRKSALGPGVPHIINTKLLKHFTCLTYNNGRLRNLISDSMKAKITAYVIILALHIHDFQIDLTVLQRDLKLSEKRMMEIAKAMRLKISKRRVSVAAGSEEDHKLGTLSLPLPPAQTSDRLAKRRKIT.

Serine 35 and serine 163 each carry phosphoserine. Position 373 is an N6-acetyllysine (lysine 373). Positions 397–419 (GTLSLPLPPAQTSDRLAKRRKIT) are disordered.

This sequence belongs to the eukaryotic RPA49/POLR1E RNA polymerase subunit family. Component of the RNA polymerase I (Pol I) complex consisting of 13 subunits: a ten-subunit catalytic core composed of POLR1A/RPA1, POLR1B/RPA2, POLR1C/RPAC1, POLR1D/RPAC2, POLR1H/RPA12, POLR2E/RPABC1, POLR2F/RPABC2, POLR2H/RPABC3, POLR2K/RPABC4 and POLR2L/RPABC5; a mobile stalk subunit POLR1F/RPA43 protruding from the core and additional subunits homologous to general transcription factors POLR1E/RPA49 and POLR1G/RPA34. Forms a heterodimer with POLR1G/RPA34. Interacts with POLR1G. Also binds UBTF/UBF. Interacts with PWP1. Post-translationally, acetylated at Lys-373 by CREBBP/CBP, leading to decreased RNA polymerase I transcription. In normal conditions, deacetylated by SIRT7, promoting the association of RNA polymerase I with the rDNA promoter region and coding region. In response to stress, SIRT7 is released from nucleoli leading to hyperacetylation of POLR1E/PAF53 and decreased association of RNA polymerase I with the rDNA promoter region.

It is found in the nucleus. Its subcellular location is the nucleolus. Component of RNA polymerase I (Pol I), a DNA-dependent RNA polymerase which synthesizes ribosomal RNA precursors using the four ribonucleoside triphosphates as substrates. Appears to be involved in the formation of the initiation complex at the promoter by mediating the interaction between Pol I and UBTF/UBF. This Homo sapiens (Human) protein is DNA-directed RNA polymerase I subunit RPA49 (POLR1E).